Here is a 243-residue protein sequence, read N- to C-terminus: Venom nerve growth factor (243 aa).

A signal peptide spans 1 to 18 (MSMLCYTLIIVFLIGIWA). Residues 19-125 (APKSEDNVPL…TLNRNIRAKR (107 aa)) constitute a propeptide that is removed on maturation. Residues 47-66 (GLKTSRNTDQRHPAPKKAED) are compositionally biased toward basic and acidic residues. The interval 47–69 (GLKTSRNTDQRHPAPKKAEDQEL) is disordered. 3 cysteine pairs are disulfide-bonded: Cys-139-Cys-204, Cys-182-Cys-232, and Cys-192-Cys-234. An N-linked (GlcNAc...) asparagine glycan is attached at Asn-148.

The protein belongs to the NGF-beta family. In terms of assembly, homodimer; non-covalently linked. Expressed by the venom gland.

The protein resides in the secreted. Its function is as follows. Nerve growth factor is important for the development and maintenance of the sympathetic and sensory nervous systems. It stimulates division and differentiation of sympathetic and embryonic sensory neurons as well as basal forebrain cholinergic neurons in the brain. Its relevance in the snake venom is not clear. However, it has been shown to inhibit metalloproteinase-dependent proteolysis of platelet glycoprotein Ib alpha, suggesting a metalloproteinase inhibition to prevent metalloprotease autodigestion and/or protection against prey proteases. Binds a lipid between the two protein chains in the homodimer. The lipid-bound form promotes histamine relase from mouse mast cells, contrary to the lipid-free form. In Oxyuranus scutellatus scutellatus (Australian taipan), this protein is Venom nerve growth factor.